Consider the following 536-residue polypeptide: Xylulose kinase (536 aa).

Residues His99, Arg170, Asp280, and Asn281 each coordinate substrate. ATP is bound by residues Trp355, 441-442, and Asn445; that span reads GA.

The protein belongs to the FGGY kinase family. As to quaternary structure, monomer.

It carries out the reaction D-xylulose + ATP = D-xylulose 5-phosphate + ADP + H(+). In terms of biological role, phosphorylates D-xylulose to produce D-xylulose 5-phosphate, a molecule that may play an important role in the regulation of glucose metabolism and lipogenesis. This chain is Xylulose kinase (Xylb), found in Rattus norvegicus (Rat).